A 254-amino-acid chain; its full sequence is Proteasome activator complex subunit 3 (254 aa).

Alanine 2 is modified (N-acetylalanine). 2 positions are modified to phosphoserine: serine 17 and serine 24. Lysine 195 is modified (N6-acetyllysine; by P300/CBP). The residue at position 247 (serine 247) is a Phosphoserine; by CHEK2.

Belongs to the PA28 family. Homoheptamer; the stability of the heptamer is essential for the specific activation of the trypsine-like subunit and inhibition of the chymotrypsin-like and postglutamyl-preferring (PGPH) subunits of the proteasome. Interacts with p53/TP53 and MDM2. Interacts with MAP3K3. Associates with the proteasome. Interacts with CCAR2. Interacts with PSME3IP1 (via C-terminus); the interaction is direct and promotes the association of PSME3 with the 20S proteasome. Interacts with COIL; the interaction is inhibited by PSME3IP1. In terms of assembly, (Microbial infection) Interacts with human cytomegalovirus UL27. Post-translationally, phosphorylated by MAP3K3. Phosphorylation at Ser-247 promotes its association with CCAR2. Acetylation at the major site Lys-195 is important for oligomerization and ability to degrade its target substrates. Deacetylated by SIRT1.

The protein resides in the nucleus. It localises to the cytoplasm. Subunit of the 11S REG-gamma (also called PA28-gamma) proteasome regulator, a doughnut-shaped homoheptamer which associates with the proteasome. 11S REG-gamma activates the trypsin-like catalytic subunit of the proteasome but inhibits the chymotrypsin-like and postglutamyl-preferring (PGPH) subunits. Facilitates the MDM2-p53/TP53 interaction which promotes ubiquitination- and MDM2-dependent proteasomal degradation of p53/TP53, limiting its accumulation and resulting in inhibited apoptosis after DNA damage. May also be involved in cell cycle regulation. Mediates CCAR2 and CHEK2-dependent SIRT1 inhibition. In Homo sapiens (Human), this protein is Proteasome activator complex subunit 3 (PSME3).